The sequence spans 2184 residues: Chromodomain-helicase-DNA-binding protein 8 (2184 aa).

Disordered regions lie at residues 379 to 399 and 419 to 527; these read VKTSTGGGESRKLDSQKKQEK and IPRV…KRKK. A compositionally biased stretch (basic and acidic residues) spans 387–399; sequence ESRKLDSQKKQEK. Positions 425-437 are enriched in acidic residues; sequence EDELPSVNPEDDD. A compositionally biased stretch (basic and acidic residues) spans 448–459; sequence GETSDRSKDEKP. The segment covering 516-527 has biased composition (basic residues); that stretch reads KRRSNRQVKRKK. Chromo domains follow at residues 586-653 and 668-734; these read AIVD…TQMQ and VEVD…RVAR. Residues 767–941 form the Helicase ATP-binding domain; it reads LFNWYNRQNC…FSLLHFLEPT (175 aa). Position 780-787 (780-787) interacts with ATP; it reads DEMGLGKT. Residues 892 to 895 carry the DEAH box motif; it reads DEAH. One can recognise a Helicase C-terminal domain in the interval 1081-1252; that stretch reads LIDKLLPKLR…FTKKEIEDLL (172 aa). 2 disordered regions span residues 1907-1989 and 2039-2076; these read GISG…EESR and WSSPRRLSDPPSDSPDSLPPTPEQQSPAHFTQIRPAPD. 2 stretches are compositionally biased toward low complexity: residues 1912-1961 and 2040-2054; these read SRPS…SNSE and SSPRRLSDPPSDSPD.

This sequence belongs to the SNF2/RAD54 helicase family. CHD8 subfamily. As to quaternary structure, component of some MLL1/MLL complex.

The protein resides in the nucleus. The enzyme catalyses ATP + H2O = ADP + phosphate + H(+). Functionally, ATP-dependent chromatin-remodeling factor, it slides nucleosomes along DNA; nucleosome sliding requires ATP. Acts as a transcription repressor by remodeling chromatin structure and recruiting histone H1 to target genes. Suppresses p53/tp53-mediated apoptosis by recruiting histone H1 and preventing p53/tp53 transactivation activity. Acts as a negative regulator of Wnt signaling pathway by regulating beta-catenin (ctnnb1) activity. Negatively regulates ctnnb1-targeted gene expression by being recruited specifically to the promoter regions of several ctnnb1 responsive genes. May also act as a transcription activator by participating in efficient U6 RNA polymerase III transcription. In Xenopus tropicalis (Western clawed frog), this protein is Chromodomain-helicase-DNA-binding protein 8.